The sequence spans 539 residues: Probable protein kinase UbiB (539 aa).

The helical transmembrane segment at 23–43 (DLLFALPLPWWMLALRFVLPW) threads the bilayer. Residues 125-492 (RFDEKPLASA…WHDRKDEPVL (368 aa)) form the Protein kinase domain. ATP contacts are provided by residues 131 to 139 (LASASVAQV) and lysine 153. The active-site Proton acceptor is aspartate 288. The next 2 helical transmembrane spans lie at 494–514 (LIGA…SEAA) and 517–537 (LLTL…YLIV).

The protein belongs to the ABC1 family. UbiB subfamily.

The protein localises to the cell inner membrane. It participates in cofactor biosynthesis; ubiquinone biosynthesis [regulation]. Is probably a protein kinase regulator of UbiI activity which is involved in aerobic coenzyme Q (ubiquinone) biosynthesis. This Pseudomonas syringae pv. syringae (strain B728a) protein is Probable protein kinase UbiB.